The primary structure comprises 209 residues: Uracil phosphoribosyltransferase (209 aa).

5-phospho-alpha-D-ribose 1-diphosphate-binding positions include Arg79, Arg104, and 131–139 (DPMLATGGS). Uracil is bound by residues Ile194 and 199 to 201 (GDA). Position 200 (Asp200) interacts with 5-phospho-alpha-D-ribose 1-diphosphate.

This sequence belongs to the UPRTase family. The cofactor is Mg(2+).

It catalyses the reaction UMP + diphosphate = 5-phospho-alpha-D-ribose 1-diphosphate + uracil. It functions in the pathway pyrimidine metabolism; UMP biosynthesis via salvage pathway; UMP from uracil: step 1/1. Allosterically activated by GTP. Catalyzes the conversion of uracil and 5-phospho-alpha-D-ribose 1-diphosphate (PRPP) to UMP and diphosphate. This Finegoldia magna (strain ATCC 29328 / DSM 20472 / WAL 2508) (Peptostreptococcus magnus) protein is Uracil phosphoribosyltransferase.